A 159-amino-acid chain; its full sequence is uncharacterized protein (159 aa).

This is an uncharacterized protein from Methanocaldococcus jannaschii (strain ATCC 43067 / DSM 2661 / JAL-1 / JCM 10045 / NBRC 100440) (Methanococcus jannaschii).